The following is a 197-amino-acid chain: dITP/XTP pyrophosphatase (197 aa).

Residue 9-14 (SNNAGK) participates in substrate binding. Residue D70 is the Proton acceptor of the active site. D70 is a Mg(2+) binding site. Residues S71, 153 to 156 (FGYD), K176, and 181 to 182 (HR) contribute to the substrate site.

It belongs to the HAM1 NTPase family. Homodimer. The cofactor is Mg(2+).

It catalyses the reaction XTP + H2O = XMP + diphosphate + H(+). The catalysed reaction is dITP + H2O = dIMP + diphosphate + H(+). The enzyme catalyses ITP + H2O = IMP + diphosphate + H(+). In terms of biological role, pyrophosphatase that catalyzes the hydrolysis of nucleoside triphosphates to their monophosphate derivatives, with a high preference for the non-canonical purine nucleotides XTP (xanthosine triphosphate), dITP (deoxyinosine triphosphate) and ITP. Seems to function as a house-cleaning enzyme that removes non-canonical purine nucleotides from the nucleotide pool, thus preventing their incorporation into DNA/RNA and avoiding chromosomal lesions. The chain is dITP/XTP pyrophosphatase from Chromobacterium violaceum (strain ATCC 12472 / DSM 30191 / JCM 1249 / CCUG 213 / NBRC 12614 / NCIMB 9131 / NCTC 9757 / MK).